The chain runs to 224 residues: Holliday junction branch migration complex subunit RuvA (224 aa).

Residues 1–67 are domain I; that stretch reads MISWLKGEKV…EDGTSLYGFI (67 aa). The interval 68-146 is domain II; sequence EVNQRDLFRE…RFTDNDKTIH (79 aa). Residues 147–157 form a flexible linker region; sequence ENKNDIEANQF. The tract at residues 157–224 is domain III; sequence FSKYIDEIYL…ILMKLSEKST (68 aa).

This sequence belongs to the RuvA family. As to quaternary structure, homotetramer. Forms an RuvA(8)-RuvB(12)-Holliday junction (HJ) complex. HJ DNA is sandwiched between 2 RuvA tetramers; dsDNA enters through RuvA and exits via RuvB. An RuvB hexamer assembles on each DNA strand where it exits the tetramer. Each RuvB hexamer is contacted by two RuvA subunits (via domain III) on 2 adjacent RuvB subunits; this complex drives branch migration. In the full resolvosome a probable DNA-RuvA(4)-RuvB(12)-RuvC(2) complex forms which resolves the HJ.

The protein localises to the cytoplasm. In terms of biological role, the RuvA-RuvB-RuvC complex processes Holliday junction (HJ) DNA during genetic recombination and DNA repair, while the RuvA-RuvB complex plays an important role in the rescue of blocked DNA replication forks via replication fork reversal (RFR). RuvA specifically binds to HJ cruciform DNA, conferring on it an open structure. The RuvB hexamer acts as an ATP-dependent pump, pulling dsDNA into and through the RuvAB complex. HJ branch migration allows RuvC to scan DNA until it finds its consensus sequence, where it cleaves and resolves the cruciform DNA. This Prochlorococcus marinus (strain NATL2A) protein is Holliday junction branch migration complex subunit RuvA.